The primary structure comprises 216 residues: Probable inactive E3 ubiquitin-protein ligase SINAT6 (216 aa).

Residues 5-74 (INDLQVESRV…LLLHLRNDHN (70 aa)) form an SIAH-type zinc finger.

It belongs to the SINA (Seven in absentia) family. Homodimer. Interacts with SINAT1, SINAT2, SINAT3, SINAT4 and SINAT5. Interacts with ATG6 and TRAF1A. As to expression, expressed in roots, rosette leaves, cauline leaves, guard cells and flowers.

Its subcellular location is the cytoplasm. The protein localises to the nucleus. Functionally, probable inactive E3 ubiquitin-protein ligase that plays a role in regulation of autophagy. Upon starvation, involved in maintaining ATG6 homeostasis by competitively associating with ATG6, a component of the autophagosome complex. Acts as a positive regulator of drought stress response. Functions as a positive regulator of abscisic acid-mediated stomatal closure. This Arabidopsis thaliana (Mouse-ear cress) protein is Probable inactive E3 ubiquitin-protein ligase SINAT6.